The chain runs to 312 residues: Ribosomal RNA small subunit methyltransferase H (312 aa).

S-adenosyl-L-methionine-binding positions include Gly36 to His38, Asp55, Phe81, Asp103, and Gln110.

Belongs to the methyltransferase superfamily. RsmH family.

It localises to the cytoplasm. It carries out the reaction cytidine(1402) in 16S rRNA + S-adenosyl-L-methionine = N(4)-methylcytidine(1402) in 16S rRNA + S-adenosyl-L-homocysteine + H(+). Its function is as follows. Specifically methylates the N4 position of cytidine in position 1402 (C1402) of 16S rRNA. The protein is Ribosomal RNA small subunit methyltransferase H of Marinomonas sp. (strain MWYL1).